We begin with the raw amino-acid sequence, 347 residues long: GTP 3',8-cyclase (347 aa).

Positions 12-242 constitute a Radical SAM core domain; the sequence is FRPFGVLRLS…QRIDARWPLR (231 aa). Arginine 19 serves as a coordination point for GTP. Residues cysteine 26 and cysteine 30 each coordinate [4Fe-4S] cluster. Tyrosine 32 contacts S-adenosyl-L-methionine. Cysteine 33 contacts [4Fe-4S] cluster. Arginine 65 is a GTP binding site. S-adenosyl-L-methionine is bound at residue glycine 69. Residue threonine 104 coordinates GTP. Residue serine 129 participates in S-adenosyl-L-methionine binding. Lysine 178 is a GTP binding site. An S-adenosyl-L-methionine-binding site is contributed by methionine 212. Residues cysteine 275 and cysteine 278 each coordinate [4Fe-4S] cluster. 280–282 contributes to the GTP binding site; it reads RLR. Cysteine 292 is a binding site for [4Fe-4S] cluster.

Belongs to the radical SAM superfamily. MoaA family. Monomer and homodimer. [4Fe-4S] cluster is required as a cofactor.

The enzyme catalyses GTP + AH2 + S-adenosyl-L-methionine = (8S)-3',8-cyclo-7,8-dihydroguanosine 5'-triphosphate + 5'-deoxyadenosine + L-methionine + A + H(+). It functions in the pathway cofactor biosynthesis; molybdopterin biosynthesis. Its function is as follows. Catalyzes the cyclization of GTP to (8S)-3',8-cyclo-7,8-dihydroguanosine 5'-triphosphate. The chain is GTP 3',8-cyclase from Synechococcus sp. (strain WH7803).